A 360-amino-acid polypeptide reads, in one-letter code: Photosystem II protein D1 (360 aa).

The next 3 membrane-spanning stretches (helical) occupy residues 29–46 (YIGWFGVLMIPTLLTATT), 118–133 (HFLLGVASYMGREWEL), and 142–156 (WIFVAFSAPVAAASA). H118 is a chlorophyll a binding site. Y126 is a binding site for pheophytin a. [CaMn4O5] cluster contacts are provided by D170 and E189. The chain crosses the membrane as a helical span at residues 197 to 218 (FHMAGVAGVFGGSLFSAMHGSL). H198 contributes to the chlorophyll a binding site. A quinone is bound by residues H215 and 264–265 (SF). H215 is a Fe cation binding site. H272 is a binding site for Fe cation. A helical membrane pass occupies residues 274–288 (FLAAWPVVRIWLTAL). [CaMn4O5] cluster contacts are provided by H332, E333, D342, and A344. Positions 345–360 (AGEVLPVAVSAPAVHA) are excised as a propeptide.

The protein belongs to the reaction center PufL/M/PsbA/D family. As to quaternary structure, PSII is composed of 1 copy each of membrane proteins PsbA, PsbB, PsbC, PsbD, PsbE, PsbF, PsbH, PsbI, PsbJ, PsbK, PsbL, PsbM, PsbT, PsbX, PsbY, PsbZ, Psb30/Ycf12, at least 3 peripheral proteins of the oxygen-evolving complex and a large number of cofactors. It forms dimeric complexes. The D1/D2 heterodimer binds P680, chlorophylls that are the primary electron donor of PSII, and subsequent electron acceptors. It shares a non-heme iron and each subunit binds pheophytin, quinone, additional chlorophylls, carotenoids and lipids. D1 provides most of the ligands for the Mn4-Ca-O5 cluster of the oxygen-evolving complex (OEC). There is also a Cl(-1) ion associated with D1 and D2, which is required for oxygen evolution. The PSII complex binds additional chlorophylls, carotenoids and specific lipids. is required as a cofactor. Tyr-161 forms a radical intermediate that is referred to as redox-active TyrZ, YZ or Y-Z. Post-translationally, C-terminally processed by CTPA; processing is essential to allow assembly of the oxygen-evolving complex and thus photosynthetic growth.

The protein resides in the plastid. It is found in the chloroplast thylakoid membrane. It carries out the reaction 2 a plastoquinone + 4 hnu + 2 H2O = 2 a plastoquinol + O2. Photosystem II (PSII) is a light-driven water:plastoquinone oxidoreductase that uses light energy to abstract electrons from H(2)O, generating O(2) and a proton gradient subsequently used for ATP formation. It consists of a core antenna complex that captures photons, and an electron transfer chain that converts photonic excitation into a charge separation. The D1/D2 (PsbA/PsbD) reaction center heterodimer binds P680, the primary electron donor of PSII as well as several subsequent electron acceptors. The polypeptide is Photosystem II protein D1 (Bumilleriopsis filiformis (Yellow-green alga)).